The sequence spans 1108 residues: DNA-directed RNA polymerase subunit beta (1108 aa).

The protein belongs to the RNA polymerase beta chain family. In plastids the minimal PEP RNA polymerase catalytic core is composed of four subunits: alpha, beta, beta', and beta''. When a (nuclear-encoded) sigma factor is associated with the core the holoenzyme is formed, which can initiate transcription.

The protein localises to the plastid. It is found in the chloroplast. It catalyses the reaction RNA(n) + a ribonucleoside 5'-triphosphate = RNA(n+1) + diphosphate. DNA-dependent RNA polymerase catalyzes the transcription of DNA into RNA using the four ribonucleoside triphosphates as substrates. This is DNA-directed RNA polymerase subunit beta from Gnetum parvifolium (Small-leaved jointfir).